The sequence spans 369 residues: Flagellar P-ring protein (369 aa).

The N-terminal stretch at 1 to 24 (MKTLHRCIGVALLALGALAGTAHA) is a signal peptide.

This sequence belongs to the FlgI family. The basal body constitutes a major portion of the flagellar organelle and consists of four rings (L,P,S, and M) mounted on a central rod.

It localises to the periplasm. The protein localises to the bacterial flagellum basal body. Its function is as follows. Assembles around the rod to form the L-ring and probably protects the motor/basal body from shearing forces during rotation. The polypeptide is Flagellar P-ring protein (Ralstonia nicotianae (strain ATCC BAA-1114 / GMI1000) (Ralstonia solanacearum)).